We begin with the raw amino-acid sequence, 220 residues long: Ribosome biogenesis protein 15 (220 aa).

The segment at 1 to 82 is disordered; sequence MVKSTSKTST…KQANEKKSKD (82 aa). The span at 9–30 shows a compositional bias: basic and acidic residues; that stretch reads STKETVTKQPTEEKPIQEKEEL. The span at 39 to 60 shows a compositional bias: acidic residues; the sequence is SDEEDEKDEDEIEGLAASDDEQ. An RRM domain is found at 91-169; it reads GIIYVSRLPH…HLLQVRVLPK (79 aa).

Component of the pre-66S ribosomal particle. Interacts with NOP7 and RRP1.

It is found in the cytoplasm. The protein localises to the nucleus. Its subcellular location is the nucleolus. Its function is as follows. Involved in the biogenesis of the 60S ribosomal subunit. Required for pre-rRNA processing and cytokinesis. Associates with the precursors of the 25S and 5.8S rRNAs. This is Ribosome biogenesis protein 15 from Saccharomyces cerevisiae (strain ATCC 204508 / S288c) (Baker's yeast).